The sequence spans 103 residues: Nucleoid-associated protein A2cp1_3777 (103 aa).

This sequence belongs to the YbaB/EbfC family. As to quaternary structure, homodimer.

It is found in the cytoplasm. The protein resides in the nucleoid. In terms of biological role, binds to DNA and alters its conformation. May be involved in regulation of gene expression, nucleoid organization and DNA protection. The sequence is that of Nucleoid-associated protein A2cp1_3777 from Anaeromyxobacter dehalogenans (strain 2CP-1 / ATCC BAA-258).